A 482-amino-acid chain; its full sequence is FAD-linked oxidoreductase alt4 (482 aa).

Residues 53–211 (ERPTYLAIVD…LEATFQVYPQ (159 aa)) form the FAD-binding PCMH-type domain.

The protein belongs to the oxygen-dependent FAD-linked oxidoreductase family. FAD is required as a cofactor.

It participates in secondary metabolite biosynthesis. In terms of biological role, FAD-linked oxidoreductase; part of the gene cluster that mediates the biosynthesis of alternapyrone derivatives. Alternapyrone is a decaketide with octa-methylation from methionine on every C2 unit except the third unit. All the domains in the polyketide synthase alt5 are apparently involved in alternapyrone synthesis, that is, the 8 CMeT, 7 KR, 7 DH, and 4 ER reactions in the 9 KS-mediated condensation steps required for alternapyrone synthesis. the alternapyrone produced by alt5 might be intensively modified by cytochrome P450 monooxygenases alt1, alt2 and alt3 and FAD-dependent oxidoreductase alt4 present in the alt gene cluster. The polypeptide is FAD-linked oxidoreductase alt4 (Alternaria solani).